Reading from the N-terminus, the 515-residue chain is Integrator complex subunit 14 (515 aa).

Residues 2-204 form the VWFA domain; that stretch reads PTVVVMDVSL…KNVQSMFGKL (203 aa). 3 residues coordinate Mg(2+): Ser-10, Ser-12, and Thr-86. Lys-418 is modified (N6-acetyllysine).

The protein belongs to the Integrator subunit 14 family. Component of the Integrator complex, composed of core subunits INTS1, INTS2, INTS3, INTS4, INTS5, INTS6, INTS7, INTS8, INTS9/RC74, INTS10, INTS11/CPSF3L, INTS12, INTS13, INTS14 and INTS15. The core complex associates with protein phosphatase 2A subunits PPP2CA and PPP2R1A, to form the Integrator-PP2A (INTAC) complex. INTS14 is part of the tail subcomplex, composed of INTS10, INTS13, INTS14 and INTS15.

Its subcellular location is the nucleus. Functionally, component of the integrator complex, a multiprotein complex that terminates RNA polymerase II (Pol II) transcription in the promoter-proximal region of genes. The integrator complex provides a quality checkpoint during transcription elongation by driving premature transcription termination of transcripts that are unfavorably configured for transcriptional elongation: the complex terminates transcription by (1) catalyzing dephosphorylation of the C-terminal domain (CTD) of Pol II subunit POLR2A/RPB1 and SUPT5H/SPT5, (2) degrading the exiting nascent RNA transcript via endonuclease activity and (3) promoting the release of Pol II from bound DNA. The integrator complex is also involved in terminating the synthesis of non-coding Pol II transcripts, such as enhancer RNAs (eRNAs), small nuclear RNAs (snRNAs), telomerase RNAs and long non-coding RNAs (lncRNAs). Within the integrator complex, INTS14 is part of the integrator tail module that acts as a platform for the recruitment of transcription factors at promoters. The chain is Integrator complex subunit 14 from Mus musculus (Mouse).